The chain runs to 92 residues: Small ribosomal subunit protein uS19c (92 aa).

Belongs to the universal ribosomal protein uS19 family.

The protein resides in the plastid. It localises to the chloroplast. Functionally, protein S19 forms a complex with S13 that binds strongly to the 16S ribosomal RNA. The chain is Small ribosomal subunit protein uS19c (rps19) from Pinus thunbergii (Japanese black pine).